A 163-amino-acid polypeptide reads, in one-letter code: Peptide deformylase (163 aa).

Cys91 and His133 together coordinate Fe cation. Residue Glu134 is part of the active site. His137 is a Fe cation binding site.

It belongs to the polypeptide deformylase family. Fe(2+) serves as cofactor.

It carries out the reaction N-terminal N-formyl-L-methionyl-[peptide] + H2O = N-terminal L-methionyl-[peptide] + formate. In terms of biological role, removes the formyl group from the N-terminal Met of newly synthesized proteins. Requires at least a dipeptide for an efficient rate of reaction. N-terminal L-methionine is a prerequisite for activity but the enzyme has broad specificity at other positions. The protein is Peptide deformylase of Lachnoclostridium phytofermentans (strain ATCC 700394 / DSM 18823 / ISDg) (Clostridium phytofermentans).